The sequence spans 344 residues: uncharacterized protein (344 aa).

The tract at residues 190 to 232 (SGKRVRSAKKSGADAARASEGATCDRASSESVSPTARPPAQAS) is disordered.

This is an uncharacterized protein from Treponema pallidum (strain Nichols).